The sequence spans 809 residues: Zygotic DNA replication licensing factor mcm3 (809 aa).

The 208-residue stretch at 297–504 (IFEQLSRSLA…QDREISDHVL (208 aa)) folds into the MCM domain. 347-354 (GDPSVAKS) contacts ATP. The short motif at 479-482 (SRFD) is the Arginine finger element. Residues 664-741 (KKRRRRDEDS…TDSSAKPGLS (78 aa)) are disordered. Residues 696-705 (AQEGESHDPY) show a composition bias toward basic and acidic residues.

Belongs to the MCM family. As to quaternary structure, component of the mcm2-7 complex (RLF-M). The complex forms a toroidal hexameric ring with the proposed subunit order mcm2-mcm6-mcm4-mcm7-mcm3-mcm5. Component of the CMG helicase complex, composed of the mcm2-7 complex, the GINS complex and cdc45.

It localises to the nucleus. Its subcellular location is the chromosome. The catalysed reaction is ATP + H2O = ADP + phosphate + H(+). Functionally, acts as a component of the MCM2-7 complex (MCM complex) which is the putative replicative helicase essential for 'once per cell cycle' DNA replication initiation and elongation in eukaryotic cells. The active ATPase sites in the MCM2-7 ring are formed through the interaction surfaces of two neighboring subunits such that a critical structure of a conserved arginine finger motif is provided in trans relative to the ATP-binding site of the Walker A box of the adjacent subunit. The six ATPase active sites, however, are likely to contribute differentially to the complex helicase activity. The existence of maternal and zygotic forms of mcm3 and mcm6 suggests that specific forms of mcm2-7 complexes may be used during different stages of development. The sequence is that of Zygotic DNA replication licensing factor mcm3 (zmcm3) from Xenopus tropicalis (Western clawed frog).